Consider the following 119-residue polypeptide: Flagellar transcriptional regulator FlhD (119 aa).

This sequence belongs to the FlhD family. In terms of assembly, homodimer; disulfide-linked. Forms a heterohexamer composed of two FlhC and four FlhD subunits. Each FlhC binds a FlhD dimer, forming a heterotrimer, and a hexamer assembles by dimerization of two heterotrimers.

The protein resides in the cytoplasm. Its function is as follows. Functions in complex with FlhC as a master transcriptional regulator that regulates transcription of several flagellar and non-flagellar operons by binding to their promoter region. Activates expression of class 2 flagellar genes, including fliA, which is a flagellum-specific sigma factor that turns on the class 3 genes. Also regulates genes whose products function in a variety of physiological pathways. In Cronobacter sakazakii (strain ATCC BAA-894) (Enterobacter sakazakii), this protein is Flagellar transcriptional regulator FlhD.